A 135-amino-acid polypeptide reads, in one-letter code: MPSVSVWVRSLAPMTTWTRAAIGALGEDLAVKHLDSLGMRVLERNWRCRYGELDVIAEDPAARAVVFVEVKTRTTDHFGGVVQAVTPQKVRRLRRLAGLWLAGRDERWAAVRIDVIGVRIGRQATPEITHLTGVA.

This sequence belongs to the UPF0102 family.

The polypeptide is UPF0102 protein Mjls_1965 (Mycobacterium sp. (strain JLS)).